The chain runs to 448 residues: MSDNVPTIAAVATAPGRGGVGVIRISGKNLLPMAQALCGKTPEPRVATYADFTDADGQAIDSGLLLFFAAPASFTGEDVIELQGHGGPVVMEMLLNRCLELGARLAEPGEFTKRAFLNDKLDLAQAEGVADLIDASGRSAARLALRSLKGDFSRRIHGLVEGLITLRMLVEAALDFPEEDIDFLEAADARGKLDGLRRAVDDVLANAQQGAILREGLNVVLVGAPNVGKSSLLNALAGDEVAIVTDIAGTTRDAVRERILIDGVPVHIVDTAGLRETDDVVERIGIERSRKAVSEADVALVLVDPREGLNEKTRMILDTLPSDLKRIEIHSKSDLHAHAAGGFGTGAETVIALSAKTGDGLDALKRTLLCEAGWQGESEGLFLARTRHVNALKAAQEELSLAALCGNHQIELFAEHLRLAQVACGEITGEFTADDLLGVIFSRFCIGK.

(6S)-5-formyl-5,6,7,8-tetrahydrofolate contacts are provided by Arg24, Glu81, and Lys120. The region spanning 216 to 373 (GLNVVLVGAP…LKRTLLCEAG (158 aa)) is the TrmE-type G domain. Asn226 contributes to the K(+) binding site. GTP-binding positions include 226-231 (NVGKSS), 245-251 (TDIAGTT), and 270-273 (DTAG). Ser230 serves as a coordination point for Mg(2+). K(+)-binding residues include Thr245, Ile247, and Thr250. Thr251 serves as a coordination point for Mg(2+). Lys448 is a (6S)-5-formyl-5,6,7,8-tetrahydrofolate binding site.

The protein belongs to the TRAFAC class TrmE-Era-EngA-EngB-Septin-like GTPase superfamily. TrmE GTPase family. Homodimer. Heterotetramer of two MnmE and two MnmG subunits. The cofactor is K(+).

It localises to the cytoplasm. Functionally, exhibits a very high intrinsic GTPase hydrolysis rate. Involved in the addition of a carboxymethylaminomethyl (cmnm) group at the wobble position (U34) of certain tRNAs, forming tRNA-cmnm(5)s(2)U34. The sequence is that of tRNA modification GTPase MnmE from Neisseria gonorrhoeae (strain ATCC 700825 / FA 1090).